The primary structure comprises 545 residues: Probable protein kinase UbiB (545 aa).

Residues 123 to 501 (DFDIVPLASA…RVRQHQSHYL (379 aa)) form the Protein kinase domain. ATP is bound by residues 129–137 (LASASIAQV) and Lys-152. The Proton acceptor role is filled by Asp-287. A run of 2 helical transmembrane segments spans residues 498–518 (SHYL…VVLS) and 521–541 (EWDG…LVGW).

The protein belongs to the ABC1 family. UbiB subfamily.

Its subcellular location is the cell inner membrane. It participates in cofactor biosynthesis; ubiquinone biosynthesis [regulation]. Is probably a protein kinase regulator of UbiI activity which is involved in aerobic coenzyme Q (ubiquinone) biosynthesis. The chain is Probable protein kinase UbiB from Erwinia tasmaniensis (strain DSM 17950 / CFBP 7177 / CIP 109463 / NCPPB 4357 / Et1/99).